The primary structure comprises 379 residues: Homoserine O-succinyltransferase (379 aa).

An AB hydrolase-1 domain is found at 48 to 357 (NAVLICHALS…SAHGHDAFLM (310 aa)). Ser154 (nucleophile) is an active-site residue. Residue Arg224 coordinates substrate. Residues Asp319 and His352 contribute to the active site. Asp353 serves as a coordination point for substrate.

It belongs to the AB hydrolase superfamily. MetX family. As to quaternary structure, homodimer.

The protein localises to the cytoplasm. It carries out the reaction L-homoserine + succinyl-CoA = O-succinyl-L-homoserine + CoA. It participates in amino-acid biosynthesis; L-methionine biosynthesis via de novo pathway; O-succinyl-L-homoserine from L-homoserine: step 1/1. In terms of biological role, transfers a succinyl group from succinyl-CoA to L-homoserine, forming succinyl-L-homoserine. This Neisseria meningitidis serogroup B (strain ATCC BAA-335 / MC58) protein is Homoserine O-succinyltransferase.